The primary structure comprises 474 residues: 3-isopropylmalate dehydratase large subunit (474 aa).

Residues C355, C415, and C418 each coordinate [4Fe-4S] cluster.

Belongs to the aconitase/IPM isomerase family. LeuC type 1 subfamily. In terms of assembly, heterodimer of LeuC and LeuD. It depends on [4Fe-4S] cluster as a cofactor.

It catalyses the reaction (2R,3S)-3-isopropylmalate = (2S)-2-isopropylmalate. It participates in amino-acid biosynthesis; L-leucine biosynthesis; L-leucine from 3-methyl-2-oxobutanoate: step 2/4. Its function is as follows. Catalyzes the isomerization between 2-isopropylmalate and 3-isopropylmalate, via the formation of 2-isopropylmaleate. The chain is 3-isopropylmalate dehydratase large subunit from Shewanella oneidensis (strain ATCC 700550 / JCM 31522 / CIP 106686 / LMG 19005 / NCIMB 14063 / MR-1).